We begin with the raw amino-acid sequence, 63 residues long: MRCLPVFVILLLLIASTPSIDARPKTKDDMPLASFNDNAKRILQILSRKPCCSIHDNSCCGLG.

The N-terminal stretch at 1-22 (MRCLPVFVILLLLIASTPSIDA) is a signal peptide. Residues 23–47 (RPKTKDDMPLASFNDNAKRILQILS) constitute a propeptide that is removed on maturation. Position 60 is a cysteine amide (C60). The propeptide occupies 62–63 (LG).

It belongs to the conotoxin T superfamily. Post-translationally, contains 2 disulfide bonds that can be either 'C1-C3, C2-C4' or 'C1-C4, C2-C3', since these disulfide connectivities have been observed for conotoxins with cysteine framework V (for examples, see AC P0DQQ7 and AC P81755). As to expression, expressed by the venom duct.

It is found in the secreted. The protein is Conotoxin LeDr243 of Conus litteratus (Lettered cone).